A 657-amino-acid chain; its full sequence is Leishmanolysin (657 aa).

Positions 1–41 (MSVDSSSSSTHRRRCVAARLVRLAAAGAAVTVAVGTAAAWA) are cleaved as a signal peptide. A propeptide spans 42–102 (HAGALQHRCI…DPRPGSAPTV (61 aa)) (activation peptide). Over 44–611 (GALQHRCIHD…DRMVGLATAA (568 aa)) the chain is Extracellular. The N-linked (GlcNAc...) asparagine glycan is linked to Asn107. Intrachain disulfides connect Cys127–Cys144 and Cys193–Cys232. His266 is a Zn(2+) binding site. Glu267 is an active-site residue. Residue His270 participates in Zn(2+) binding. N-linked (GlcNAc...) asparagine glycosylation is present at Asn302. 7 disulfide bridges follow: Cys316-Cys388, Cys395-Cys458, Cys408-Cys427, Cys417-Cys492, Cys469-Cys513, Cys518-Cys568, and Cys538-Cys561. A Zn(2+)-binding site is contributed by His336. Residues Asn399, Asn409, Asn445, Asn466, and Asn501 are each glycosylated (N-linked (GlcNAc...) asparagine). A helical membrane pass occupies residues 612-632 (TVLLGMVLSLMALVVVWLLLV). Residues 633-657 (SCPWWCCKLGGPPASVTPACSPETE) lie on the Cytoplasmic side of the membrane.

Belongs to the peptidase M8 family. Zn(2+) is required as a cofactor.

The protein localises to the membrane. The catalysed reaction is Preference for hydrophobic residues at P1 and P1' and basic residues at P2' and P3'. A model nonapeptide is cleaved at -Ala-Tyr-|-Leu-Lys-Lys-.. Has an integral role during the infection of macrophages in the mammalian host. This chain is Leishmanolysin (mspC), found in Leishmania tropica.